A 63-amino-acid polypeptide reads, in one-letter code: Conotoxin PnMRCL-0111 (63 aa).

Positions 1–19 (MRCLPVFIVLLLLIVSAPG) are cleaved as a signal peptide. A propeptide spanning residues 20–49 (FDARPKTEDDVPLSSFHDDLQRTVRTLLDI) is cleaved from the precursor. Tryptophan amide is present on W62.

This sequence belongs to the conotoxin T superfamily. Contains 2 disulfide bonds that can be either 'C1-C3, C2-C4' or 'C1-C4, C2-C3', since these disulfide connectivities have been observed for conotoxins with cysteine framework V (for examples, see AC P0DQQ7 and AC P81755). As to expression, expressed by the venom duct.

The protein localises to the secreted. This Conus pennaceus (Feathered cone) protein is Conotoxin PnMRCL-0111.